A 429-amino-acid chain; its full sequence is Serine hydroxymethyltransferase (429 aa).

(6S)-5,6,7,8-tetrahydrofolate is bound by residues Leu-130 and 134–136 (GHL). Residue Lys-239 is modified to N6-(pyridoxal phosphate)lysine.

The protein belongs to the SHMT family. In terms of assembly, homodimer. Requires pyridoxal 5'-phosphate as cofactor.

It localises to the cytoplasm. It catalyses the reaction (6R)-5,10-methylene-5,6,7,8-tetrahydrofolate + glycine + H2O = (6S)-5,6,7,8-tetrahydrofolate + L-serine. Its pathway is one-carbon metabolism; tetrahydrofolate interconversion. It functions in the pathway amino-acid biosynthesis; glycine biosynthesis; glycine from L-serine: step 1/1. In terms of biological role, catalyzes the reversible interconversion of serine and glycine with tetrahydrofolate (THF) serving as the one-carbon carrier. This reaction serves as the major source of one-carbon groups required for the biosynthesis of purines, thymidylate, methionine, and other important biomolecules. Also exhibits THF-independent aldolase activity toward beta-hydroxyamino acids, producing glycine and aldehydes, via a retro-aldol mechanism. This is Serine hydroxymethyltransferase from Phenylobacterium zucineum (strain HLK1).